An 85-amino-acid polypeptide reads, in one-letter code: Phosphocarrier protein HPr (85 aa).

In terms of domain architecture, HPr spans 1-85; that stretch reads MFQNQVKITA…HLSLIMTELE (85 aa). The active-site Pros-phosphohistidine intermediate is the histidine 15.

Belongs to the HPr family.

It localises to the cytoplasm. In terms of biological role, general (non sugar-specific) component of the phosphoenolpyruvate-dependent sugar phosphotransferase system (sugar PTS). This major carbohydrate active-transport system catalyzes the phosphorylation of incoming sugar substrates concomitantly with their translocation across the cell membrane. The phosphoryl group from phosphoenolpyruvate (PEP) is transferred to the phosphoryl carrier protein HPr by enzyme I. Phospho-HPr then transfers it to the PTS EIIA domain. The sequence is that of Phosphocarrier protein HPr (ptsH) from Buchnera aphidicola subsp. Acyrthosiphon pisum (strain APS) (Acyrthosiphon pisum symbiotic bacterium).